The sequence spans 168 residues: Large ribosomal subunit protein uL29c (168 aa).

A disordered region spans residues Met1 to Pro20. Residues Met1–Met58 constitute a chloroplast transit peptide.

In terms of assembly, component of the chloroplast large ribosomal subunit (LSU). Mature 70S chloroplast ribosomes of higher plants consist of a small (30S) and a large (50S) subunit. The 30S small subunit contains 1 molecule of ribosomal RNA (16S rRNA) and 24 different proteins. The 50S large subunit contains 3 rRNA molecules (23S, 5S and 4.5S rRNA) and 33 different proteins.

The protein localises to the plastid. It is found in the chloroplast. Its function is as follows. Component of the chloroplast ribosome (chloro-ribosome), a dedicated translation machinery responsible for the synthesis of chloroplast genome-encoded proteins, including proteins of the transcription and translation machinery and components of the photosynthetic apparatus. The polypeptide is Large ribosomal subunit protein uL29c (RPL29) (Spinacia oleracea (Spinach)).